A 411-amino-acid polypeptide reads, in one-letter code: GPI-anchor transamidase (411 aa).

A signal peptide spans 1–22 (MRIAMHLPLLLLYIFLLPLSGA). Residues 23 to 376 (NNTDAAHEVI…DIDSNECFFT (354 aa)) lie on the Lumenal side of the membrane. Residues His-157 and Cys-199 contribute to the active site. Asn-256 and Asn-346 each carry an N-linked (GlcNAc...) asparagine glycan. Residues 377–397 (SFKQSATIILALIVTILWFML) traverse the membrane as a helical segment. Residues 398–411 (RGNTAKATYDLYTN) lie on the Cytoplasmic side of the membrane.

It belongs to the peptidase C13 family. Forms a complex with CDC91, GPI16, GPI17 and GAA1. The disulfide bond between GPI8 and GPI16 is important for normal enzyme activity.

The protein localises to the endoplasmic reticulum membrane. Its pathway is glycolipid biosynthesis; glycosylphosphatidylinositol-anchor biosynthesis. Functionally, mediates GPI anchoring in the endoplasmic reticulum, by replacing a protein's C-terminal GPI attachment signal peptide with a pre-assembled GPI. During this transamidation reaction, the GPI transamidase forms a carbonyl intermediate with the substrate protein. In Saccharomyces cerevisiae (strain ATCC 204508 / S288c) (Baker's yeast), this protein is GPI-anchor transamidase (GPI8).